The sequence spans 111 residues: Sulditoxin subunit B (111 aa).

Residues 1–19 form the signal peptide; sequence MKTLLLALAVVVLVCLGSA. The propeptide occupies 20-34; it reads NELGLGRQQIDRGRR. Glutamine 35 carries the post-translational modification Pyrrolidone carboxylic acid. Disulfide bonds link cysteine 44–cysteine 68, cysteine 47–cysteine 55, cysteine 61–cysteine 87, cysteine 91–cysteine 102, and cysteine 103–cysteine 108.

The protein belongs to the three-finger toxin family. Ancestral subfamily. Boigatoxin sub-subfamily. As to quaternary structure, heterodimer of sulditoxin subunits A and B; probably disulfide-linked. Expressed by the venom gland.

Its subcellular location is the secreted. Its function is as follows. Reptile-specific neurotoxin (tested on geckos). Inhibits nicotinic acetylcholine receptor (nAChR). Not toxic to mammals (tested on mice). This chain is Sulditoxin subunit B, found in Spilotes sulphureus (Amazon puffing snake).